Here is a 70-residue protein sequence, read N- to C-terminus: Small ribosomal subunit protein bS21 (70 aa).

Belongs to the bacterial ribosomal protein bS21 family.

The protein is Small ribosomal subunit protein bS21 of Campylobacter jejuni subsp. jejuni serotype O:23/36 (strain 81-176).